Reading from the N-terminus, the 56-residue chain is Hydrophobic protein LTI6A (56 aa).

Helical transmembrane passes span 11–31 and 34–54; these read IILA…CGIE and ICLL…VWVI.

The protein belongs to the UPF0057 (PMP3) family. As to expression, expressed in shoot of cold stressed seedlings.

Its subcellular location is the membrane. In terms of biological role, plays a role in the regulation of membrane potential. Could mediate a proton leak. This chain is Hydrophobic protein LTI6A (LTI6A), found in Oryza sativa subsp. japonica (Rice).